The chain runs to 362 residues: Probable dual-specificity RNA methyltransferase RlmN (362 aa).

Glu-105 serves as the catalytic Proton acceptor. Positions 111-344 (HEYGNSICVT…VTIRREQGHD (234 aa)) constitute a Radical SAM core domain. The cysteines at positions 118 and 349 are disulfide-linked. 3 residues coordinate [4Fe-4S] cluster: Cys-125, Cys-129, and Cys-132. Residues 175–176 (GE), Ser-207, 230–232 (SLH), and Asn-306 contribute to the S-adenosyl-L-methionine site. The S-methylcysteine intermediate role is filled by Cys-349.

This sequence belongs to the radical SAM superfamily. RlmN family. [4Fe-4S] cluster is required as a cofactor.

It is found in the cytoplasm. It carries out the reaction adenosine(2503) in 23S rRNA + 2 reduced [2Fe-2S]-[ferredoxin] + 2 S-adenosyl-L-methionine = 2-methyladenosine(2503) in 23S rRNA + 5'-deoxyadenosine + L-methionine + 2 oxidized [2Fe-2S]-[ferredoxin] + S-adenosyl-L-homocysteine. It catalyses the reaction adenosine(37) in tRNA + 2 reduced [2Fe-2S]-[ferredoxin] + 2 S-adenosyl-L-methionine = 2-methyladenosine(37) in tRNA + 5'-deoxyadenosine + L-methionine + 2 oxidized [2Fe-2S]-[ferredoxin] + S-adenosyl-L-homocysteine. In terms of biological role, specifically methylates position 2 of adenine 2503 in 23S rRNA and position 2 of adenine 37 in tRNAs. In Bacillus cereus (strain G9842), this protein is Probable dual-specificity RNA methyltransferase RlmN.